The following is a 406-amino-acid chain: Putative sodium-coupled neutral amino acid transporter 11 (406 aa).

Topologically, residues 1–7 (MKQAGFP) are cytoplasmic. The chain crosses the membrane as a helical span at residues 8–28 (LGILLLFWVSYVTDFSLVLLI). N44 carries N-linked (GlcNAc...) asparagine glycosylation. 6 helical membrane passes run 48-68 (GFPG…IAMI), 93-113 (VFIG…LPLS), 121-141 (LGKV…IVMA), 156-176 (AWVF…FAFI), 202-222 (MSIV…YLTF), and 241-263 (VTFG…CFVT). N275 carries an N-linked (GlcNAc...) asparagine glycan. The next 3 helical transmembrane spans lie at 279-299 (VFHI…SLLI), 301-321 (CLGI…IFII), and 340-360 (IMSC…FVMA).

It belongs to the amino acid/polyamine transporter 2 family.

The protein localises to the membrane. Its function is as follows. Putative sodium-dependent amino acid/proton antiporter. The protein is Putative sodium-coupled neutral amino acid transporter 11 (SLC38A11) of Homo sapiens (Human).